A 383-amino-acid polypeptide reads, in one-letter code: MNIHEYQAKEVLHKFNVSVPKGFVATSAEEVKTQVSQLKSDVFVVKAQIHAGGRGKAGGVKLAKSAEEAQQFVKDMIGMTLVTHQTGPSGQQVRKVYVEEGSSIKKEYYLSLVIDPKLSRPIFIFSSEGGMDIEEVAKNSPAKIVKFDIDSATSFDSSKLSSSFHLSPEQIEKITNVAKNIYDAFIATDASQIEINPLVETSSGDFIALDAKINFDDNALYRHPEIMELRDYDEEVKEEIEASKYGLSYIKMDGSIGCMVNGAGLAMATMDIIKYYGAEPANFLDVGGGASKETVTEAFKIILSDSNVKGILVNIFGGIMRCDIIASGIVAAAKEMSIKVPLVVRLSGTNFEEGKKILEESGLNIIAADELGDAAQKIVKEVK.

Positions 9–241 (KEVLHKFNVS…YDEEVKEEIE (233 aa)) constitute an ATP-grasp domain. ATP contacts are provided by residues lysine 46, 53-55 (GRG), glutamate 99, serine 102, and glutamate 107. Mg(2+) is bound by residues asparagine 196 and aspartate 210. Substrate-binding positions include asparagine 261 and 318 to 320 (GIM).

Belongs to the succinate/malate CoA ligase beta subunit family. Heterotetramer of two alpha and two beta subunits. It depends on Mg(2+) as a cofactor.

It catalyses the reaction succinate + ATP + CoA = succinyl-CoA + ADP + phosphate. It carries out the reaction GTP + succinate + CoA = succinyl-CoA + GDP + phosphate. The protein operates within carbohydrate metabolism; tricarboxylic acid cycle; succinate from succinyl-CoA (ligase route): step 1/1. In terms of biological role, succinyl-CoA synthetase functions in the citric acid cycle (TCA), coupling the hydrolysis of succinyl-CoA to the synthesis of either ATP or GTP and thus represents the only step of substrate-level phosphorylation in the TCA. The beta subunit provides nucleotide specificity of the enzyme and binds the substrate succinate, while the binding sites for coenzyme A and phosphate are found in the alpha subunit. This Wolbachia sp. subsp. Drosophila simulans (strain wRi) protein is Succinate--CoA ligase [ADP-forming] subunit beta.